We begin with the raw amino-acid sequence, 437 residues long: Probable N-acetylmuramidase (437 aa).

The first 57 residues, 1 to 57, serve as a signal peptide directing secretion; the sequence is MPVSRVKVKNRHLKKKTKKPLAFYKPTTKFVGAVLIAGTLTTTHELLLQQTSPMVQA. Disordered stretches follow at residues 217 to 244, 291 to 319, and 367 to 392; these read SSAG…SSTT, SSTN…ASQT, and ATSN…NSNA. The region spanning 243–286 is the LysM 1 domain; the sequence is TTYTVKSGDTLWGISQRYGISVAQIQSANNLKSTIIYIGQKLLL. Positions 291-317 are enriched in low complexity; sequence SSTNSGGSNNSASTTPTTSVTPAKPAS. The LysM 2 domain maps to 319 to 362; the sequence is TSVKVKSGDTLWALSVKYKTSIAQLKSWNHLSSDTIYIGQNLIV. The LysM 3 domain maps to 393-436; it reads SIHKVVKGDTLWGLSQKSGSPIASIKAWNHLSSDTILIGQYLRI.

The protein belongs to the glycosyl hydrolase 73 family.

It is found in the secreted. The catalysed reaction is Hydrolysis of (1-&gt;4)-beta-linkages between N-acetylmuramic acid and N-acetyl-D-glucosamine residues in a peptidoglycan and between N-acetyl-D-glucosamine residues in chitodextrins.. Its function is as follows. Hydrolyzes the cell wall of L.lactis and M.lysodeikticus. Required for cell separation during growth. This is Probable N-acetylmuramidase (acmA) from Lactococcus lactis subsp. cremoris (Streptococcus cremoris).